A 185-amino-acid polypeptide reads, in one-letter code: Hypoxanthine/guanine phosphoribosyltransferase (185 aa).

It belongs to the purine/pyrimidine phosphoribosyltransferase family. Archaeal HPRT subfamily. As to quaternary structure, homodimer.

Its subcellular location is the cytoplasm. The catalysed reaction is IMP + diphosphate = hypoxanthine + 5-phospho-alpha-D-ribose 1-diphosphate. It catalyses the reaction GMP + diphosphate = guanine + 5-phospho-alpha-D-ribose 1-diphosphate. Its pathway is purine metabolism; IMP biosynthesis via salvage pathway; IMP from hypoxanthine: step 1/1. Its function is as follows. Catalyzes a salvage reaction resulting in the formation of IMP that is energically less costly than de novo synthesis. The protein is Hypoxanthine/guanine phosphoribosyltransferase of Methanococcus maripaludis (strain C6 / ATCC BAA-1332).